Consider the following 369-residue polypeptide: Glutamate 5-kinase (369 aa).

Position 10 (K10) interacts with ATP. 3 residues coordinate substrate: S50, D137, and N149. ATP-binding positions include T169–D170 and T210–K216. The PUA domain occupies E276–T349.

This sequence belongs to the glutamate 5-kinase family.

The protein localises to the cytoplasm. It catalyses the reaction L-glutamate + ATP = L-glutamyl 5-phosphate + ADP. It participates in amino-acid biosynthesis; L-proline biosynthesis; L-glutamate 5-semialdehyde from L-glutamate: step 1/2. Catalyzes the transfer of a phosphate group to glutamate to form L-glutamate 5-phosphate. The chain is Glutamate 5-kinase from Desulfitobacterium hafniense (strain Y51).